Consider the following 550-residue polypeptide: Rhodopsin kinase grk7-b (550 aa).

Residues 22-45 (SSEGDAKELQKRRKSLSLPPPDVS) are disordered. A Phosphoserine modification is found at Ser-36. The RGS domain maps to 57-174 (YQSICVEQPI…QNSPFYDRFL (118 aa)). A Protein kinase domain is found at 189–451 (FYEFRILGKG…DDDPRKHAFF (263 aa)). ATP-binding positions include 195 to 203 (LGKGGFGEV) and Lys-218. Catalysis depends on Asp-314, which acts as the Proton acceptor. The AGC-kinase C-terminal domain occupies 452-517 (KSINFQRLEA…GAVPISWQKE (66 aa)). Ser-487 carries the phosphoserine modification. A disordered region spans residues 531 to 550 (SREVTGGGNSGEKSGVCSIL). Cys-547 carries the post-translational modification Cysteine methyl ester. Cys-547 carries the S-geranylgeranyl cysteine lipid modification. The propeptide at 548–550 (SIL) is removed in mature form.

It belongs to the protein kinase superfamily. AGC Ser/Thr protein kinase family. GPRK subfamily. Post-translationally, autophosphorylated in vitro at Ser-487. Phosphorylation at Ser-36 is regulated by light and activated by cAMP. In terms of tissue distribution, retina, cones.

It is found in the membrane. It carries out the reaction L-threonyl-[rhodopsin] + ATP = O-phospho-L-threonyl-[rhodopsin] + ADP + H(+). The catalysed reaction is L-seryl-[rhodopsin] + ATP = O-phospho-L-seryl-[rhodopsin] + ADP + H(+). In terms of biological role, retina-specific kinase involved in the shutoff of the photoresponse and adaptation to changing light conditions via cone opsin phosphorylation, including rhodopsin (RHO). This Xenopus laevis (African clawed frog) protein is Rhodopsin kinase grk7-b (grk7-b).